A 145-amino-acid chain; its full sequence is Maximins 3/H3 type 2 (145 aa).

The N-terminal stretch at 1–18 (MNFKYIVAVSFLIASAYA) is a signal peptide. 2 consecutive propeptides follow at residues 19 to 43 (RSVQNDEQSLSQRDVLEEEESLREI) and 74 to 124 (RTAE…KEKR). Position 144 is an isoleucine amide (I144).

The protein belongs to the bombinin family. Expressed by the skin glands.

Its subcellular location is the secreted. In terms of biological role, maximin-3 shows antibacterial activity against both Gram-positive and Gram-negative bacteria. It also shows antimicrobial activity against the fungus C.albicans, but not against A.flavus nor P.uticale. It has little hemolytic activity. It possess a significant cytotoxicity against tumor cell lines. It possess a significant anti-HIV activity. It shows high spermicidal activity. Maximin-H3 shows antibacterial activity against both Gram-positive and Gram-negative bacteria. It also shows antimicrobial activity against the fungus C.albicans. Shows strong hemolytic activity. This chain is Maximins 3/H3 type 2, found in Bombina maxima (Giant fire-bellied toad).